A 404-amino-acid chain; its full sequence is NADH-quinone oxidoreductase subunit D 2 (404 aa).

This sequence belongs to the complex I 49 kDa subunit family. As to quaternary structure, NDH-1 is composed of 14 different subunits. Subunits NuoB, C, D, E, F, and G constitute the peripheral sector of the complex.

It is found in the cell inner membrane. The catalysed reaction is a quinone + NADH + 5 H(+)(in) = a quinol + NAD(+) + 4 H(+)(out). NDH-1 shuttles electrons from NADH, via FMN and iron-sulfur (Fe-S) centers, to quinones in the respiratory chain. The immediate electron acceptor for the enzyme in this species is believed to be ubiquinone. Couples the redox reaction to proton translocation (for every two electrons transferred, four hydrogen ions are translocated across the cytoplasmic membrane), and thus conserves the redox energy in a proton gradient. This chain is NADH-quinone oxidoreductase subunit D 2, found in Sinorhizobium medicae (strain WSM419) (Ensifer medicae).